We begin with the raw amino-acid sequence, 610 residues long: WD repeat-containing protein 46 (610 aa).

Residues 1–103 form a disordered region; the sequence is METAPKPGKD…TQDPFPGPAP (103 aa). A compositionally biased stretch (basic and acidic residues) spans 7-19; the sequence is PGKDVPPKKDKLQ. Serine 41 bears the Phosphoserine mark. Over residues 65 to 77 the composition is skewed to basic residues; it reads KKSRISKKPQVPK. 6 WD repeats span residues 193 to 234, 235 to 272, 274 to 312, 315 to 354, 357 to 396, and 399 to 436; these read LRQF…CEIN, VMEA…LHCI, RCDR…IVAA, ARAG…PLAK, CHRG…QPLS, and TLPH…SPPS. The interval 538–610 is disordered; that stretch reads ERLGYDPQAK…RPSALDRFVR (73 aa). Residues 572-582 show a composition bias toward basic and acidic residues; that stretch reads VMDEEHRDKVR.

In terms of assembly, part of the small subunit (SSU) processome, composed of more than 70 proteins and the RNA chaperone small nucleolar RNA (snoRNA) U3. Interacts with DDX21, NCL, NOP2 and EBNA1BP2.

It is found in the nucleus. Its subcellular location is the nucleolus. In terms of biological role, scaffold component of the nucleolar structure. Required for localization of DDX21 and NCL to the granular compartment of the nucleolus. Part of the small subunit (SSU) processome, first precursor of the small eukaryotic ribosomal subunit. During the assembly of the SSU processome in the nucleolus, many ribosome biogenesis factors, an RNA chaperone and ribosomal proteins associate with the nascent pre-rRNA and work in concert to generate RNA folding, modifications, rearrangements and cleavage as well as targeted degradation of pre-ribosomal RNA by the RNA exosome. The polypeptide is WD repeat-containing protein 46 (WDR46) (Homo sapiens (Human)).